We begin with the raw amino-acid sequence, 676 residues long: A-type ATP synthase subunit I (676 aa).

8 consecutive transmembrane segments (helical) span residues 341 to 361 (VFIAIFFPIFFGMMLGDIGYG), 390 to 410 (AGVMSIIFGFIYGECFGPFIV), 449 to 469 (ILLFATIVIGIAKILFGFALG), 490 to 510 (IIGVLGLAMIIFGFAYNVGVF), 538 to 558 (LNVYYLAALPLLVVWFILFVM), 564 to 584 (MGAMGVILAVELLTWFGQIMS), 590 to 610 (AIGLSSVYIAFVINFIGMKLI), and 617 to 637 (IPIVGAIVLLIGHVGNLILGI).

The protein belongs to the V-ATPase 116 kDa subunit family. In terms of assembly, has multiple subunits with at least A(3), B(3), C, D, E, F, H, I and proteolipid K(x).

The protein resides in the cell membrane. Its function is as follows. Component of the A-type ATP synthase that produces ATP from ADP in the presence of a proton gradient across the membrane. This Archaeoglobus fulgidus (strain ATCC 49558 / DSM 4304 / JCM 9628 / NBRC 100126 / VC-16) protein is A-type ATP synthase subunit I.